We begin with the raw amino-acid sequence, 60 residues long: Large ribosomal subunit protein uL30 (60 aa).

The protein belongs to the universal ribosomal protein uL30 family. In terms of assembly, part of the 50S ribosomal subunit.

The chain is Large ribosomal subunit protein uL30 from Amoebophilus asiaticus (strain 5a2).